Here is a 629-residue protein sequence, read N- to C-terminus: DNA mismatch repair protein MutL (629 aa).

The tract at residues 376-396 (QYHEKPQQNQPHFSNTPVLPN) is disordered. Residues 382 to 396 (QQNQPHFSNTPVLPN) show a composition bias toward polar residues.

It belongs to the DNA mismatch repair MutL/HexB family.

Functionally, this protein is involved in the repair of mismatches in DNA. It is required for dam-dependent methyl-directed DNA mismatch repair. May act as a 'molecular matchmaker', a protein that promotes the formation of a stable complex between two or more DNA-binding proteins in an ATP-dependent manner without itself being part of a final effector complex. The protein is DNA mismatch repair protein MutL of Haemophilus influenzae (strain PittEE).